Consider the following 463-residue polypeptide: Probable glucan endo-1,3-beta-glucosidase eglC (463 aa).

The N-terminal stretch at 1 to 18 (MQLTHLLAFALSLATSEA) is a signal peptide. Residue Asn84 is glycosylated (N-linked (GlcNAc...) asparagine). Residue Glu128 is the Proton donor of the active site. Residue Asn183 is glycosylated (N-linked (GlcNAc...) asparagine). Catalysis depends on Glu239, which acts as the Nucleophile. Residue Asn312 is glycosylated (N-linked (GlcNAc...) asparagine). Disordered stretches follow at residues 317–354 (SASA…SSAV) and 396–430 (SGSS…NSGA). Gly440 carries GPI-anchor amidated glycine lipidation. The propeptide at 441–463 (GASSVSGSVFGALVAVFAFVATL) is removed in mature form.

Belongs to the glycosyl hydrolase 17 family. In terms of processing, the GPI-anchor is attached to the protein in the endoplasmic reticulum and serves to target the protein to the cell surface. There, the glucosamine-inositol phospholipid moiety is cleaved off and the GPI-modified mannoprotein is covalently attached via its lipidless GPI glycan remnant to the 1,6-beta-glucan of the outer cell wall layer.

The protein resides in the cell membrane. It is found in the secreted. It localises to the cell wall. It carries out the reaction Hydrolysis of (1-&gt;3)-beta-D-glucosidic linkages in (1-&gt;3)-beta-D-glucans.. Its function is as follows. Glucanases play a role in cell expansion during growth, in cell-cell fusion during mating, and in spore release during sporulation. This enzyme may be involved in beta-glucan degradation and also function biosynthetically as a transglycosylase. The protein is Probable glucan endo-1,3-beta-glucosidase eglC (eglC) of Aspergillus oryzae (strain ATCC 42149 / RIB 40) (Yellow koji mold).